The following is a 162-amino-acid chain: Cyclic pyranopterin monophosphate synthase (162 aa).

Substrate-binding positions include 75-77 and 113-114; these read LCH and ME. D128 is a catalytic residue.

It belongs to the MoaC family. As to quaternary structure, homohexamer; trimer of dimers.

It catalyses the reaction (8S)-3',8-cyclo-7,8-dihydroguanosine 5'-triphosphate = cyclic pyranopterin phosphate + diphosphate. It functions in the pathway cofactor biosynthesis; molybdopterin biosynthesis. Catalyzes the conversion of (8S)-3',8-cyclo-7,8-dihydroguanosine 5'-triphosphate to cyclic pyranopterin monophosphate (cPMP). The sequence is that of Cyclic pyranopterin monophosphate synthase from Burkholderia ambifaria (strain MC40-6).